The sequence spans 225 residues: Ribonuclease HII (225 aa).

Residues 35 to 225 form the RNase H type-2 domain; it reads GLVAGVDEVG…SFRPCQISPD (191 aa). A divalent metal cation is bound by residues D41, E42, and D137.

The protein belongs to the RNase HII family. Requires Mn(2+) as cofactor. It depends on Mg(2+) as a cofactor.

The protein localises to the cytoplasm. The enzyme catalyses Endonucleolytic cleavage to 5'-phosphomonoester.. In terms of biological role, endonuclease that specifically degrades the RNA of RNA-DNA hybrids. The polypeptide is Ribonuclease HII (Nostoc sp. (strain PCC 7120 / SAG 25.82 / UTEX 2576)).